The chain runs to 267 residues: ATP synthase subunit a (267 aa).

5 consecutive transmembrane segments (helical) span residues 38 to 58 (WHIDSLLFSVGLGVLFLFVFY), 98 to 118 (IAPLALTIFVWILLMNTMDLI), 145 to 165 (NITFGLSLSVFALIVFYSIKI), 208 to 228 (LFGNLYAGELIFILIALMPWW), and 238 to 258 (AIFHILVIVLQAFIFMMLTIV).

The protein belongs to the ATPase A chain family. F-type ATPases have 2 components, CF(1) - the catalytic core - and CF(0) - the membrane proton channel. CF(1) has five subunits: alpha(3), beta(3), gamma(1), delta(1), epsilon(1). CF(0) has three main subunits: a(1), b(2) and c(9-12). The alpha and beta chains form an alternating ring which encloses part of the gamma chain. CF(1) is attached to CF(0) by a central stalk formed by the gamma and epsilon chains, while a peripheral stalk is formed by the delta and b chains.

Its subcellular location is the cell inner membrane. Key component of the proton channel; it plays a direct role in the translocation of protons across the membrane. The sequence is that of ATP synthase subunit a from Psychromonas ingrahamii (strain DSM 17664 / CCUG 51855 / 37).